The sequence spans 471 residues: COP9 signalosome complex subunit 1 (471 aa).

The PCI domain occupies 249-411; the sequence is CFLLASFDHC…KILYARDVDQ (163 aa). A disordered region spans residues 445–471; it reads HVKSPPREGSQGELTPANSQSRMSTNM. 2 positions are modified to phosphoserine: Ser-448 and Ser-454. Residues 456–471 are compositionally biased toward polar residues; the sequence is GELTPANSQSRMSTNM. Thr-459 carries the post-translational modification Phosphothreonine. Phosphoserine is present on Ser-463.

This sequence belongs to the CSN1 family. In terms of assembly, component of the CSN complex, composed of COPS1/GPS1, COPS2, COPS3, COPS4, COPS5, COPS6, COPS7 (COPS7A or COPS7B), COPS8 and COPS9. In the complex, it probably interacts directly with COPS2, COPS3, COPS4 and COPS5. Interacts directly with inositol kinase ITPK1. Interacts with CAPN8. Interacts with USP48. Interacts with ASB4; this interaction negatively regulates GPS1. As to expression, expressed in the base region of the oxyntic and pyloric mucosae.

The protein resides in the cytoplasm. It is found in the nucleus. Essential component of the COP9 signalosome complex (CSN), a complex involved in various cellular and developmental processes. The CSN complex is an essential regulator of the ubiquitin (Ubl) conjugation pathway by mediating the deneddylation of the cullin subunits of SCF-type E3 ligase complexes, leading to decrease the Ubl ligase activity of SCF-type complexes such as SCF, CSA or DDB2. The complex is also involved in phosphorylation of p53/TP53, c-jun/JUN, IkappaBalpha/NFKBIA, ITPK1 and IRF8/ICSBP, possibly via its association with CK2 and PKD kinases. CSN-dependent phosphorylation of TP53 and JUN promotes and protects degradation by the Ubl system, respectively. Suppresses G-protein- and mitogen-activated protein kinase-mediated signal transduction. The polypeptide is COP9 signalosome complex subunit 1 (Gps1) (Mus musculus (Mouse)).